Consider the following 434-residue polypeptide: 3-phosphoshikimate 1-carboxyvinyltransferase (434 aa).

3 residues coordinate 3-phosphoshikimate: lysine 22, serine 23, and arginine 27. Residue lysine 22 coordinates phosphoenolpyruvate. Phosphoenolpyruvate-binding residues include glycine 93 and arginine 121. 6 residues coordinate 3-phosphoshikimate: serine 168, serine 169, glutamine 170, serine 199, aspartate 320, and lysine 347. Position 170 (glutamine 170) interacts with phosphoenolpyruvate. The Proton acceptor role is filled by aspartate 320. 3 residues coordinate phosphoenolpyruvate: arginine 351, arginine 394, and lysine 419.

The protein belongs to the EPSP synthase family. As to quaternary structure, monomer.

It is found in the cytoplasm. The catalysed reaction is 3-phosphoshikimate + phosphoenolpyruvate = 5-O-(1-carboxyvinyl)-3-phosphoshikimate + phosphate. The protein operates within metabolic intermediate biosynthesis; chorismate biosynthesis; chorismate from D-erythrose 4-phosphate and phosphoenolpyruvate: step 6/7. Functionally, catalyzes the transfer of the enolpyruvyl moiety of phosphoenolpyruvate (PEP) to the 5-hydroxyl of shikimate-3-phosphate (S3P) to produce enolpyruvyl shikimate-3-phosphate and inorganic phosphate. This Burkholderia lata (strain ATCC 17760 / DSM 23089 / LMG 22485 / NCIMB 9086 / R18194 / 383) protein is 3-phosphoshikimate 1-carboxyvinyltransferase.